The chain runs to 427 residues: Putative F-box/FBD/LRR-repeat protein At4g13965 (427 aa).

Positions 13 to 61 (ADRISQLPEALIIQILSLLPTEVAVTTSVLSKQWQFLWKMLPKLNFDSL) constitute an F-box domain. LRR repeat units lie at residues 67 to 93 (FKTF…HLIV), 98 to 122 (CNSM…VLEV), 141 to 168 (TLEL…HLHY), 169 to 194 (VDFK…VVHR), 213 to 241 (LTIY…KIVG), and 258 to 284 (SMIV…FLEF). Positions 346–396 (KWNKPKIVPECLLFHLETFMWKGYEWKRNDETEVAKYILSNTNRLKRATFF) constitute an FBD domain.

This Arabidopsis thaliana (Mouse-ear cress) protein is Putative F-box/FBD/LRR-repeat protein At4g13965.